Here is a 233-residue protein sequence, read N- to C-terminus: Glycerol-3-phosphate acyltransferase (233 aa).

5 consecutive transmembrane segments (helical) span residues 7 to 27 (WIII…GYII), 94 to 114 (ISIV…YIGF), 127 to 147 (VIAI…IVAF), 153 to 173 (SIGS…GVLI), and 185 to 205 (ISYE…LLII).

The protein belongs to the PlsY family. In terms of assembly, probably interacts with PlsX.

The protein localises to the cell membrane. It carries out the reaction an acyl phosphate + sn-glycerol 3-phosphate = a 1-acyl-sn-glycero-3-phosphate + phosphate. The protein operates within lipid metabolism; phospholipid metabolism. Catalyzes the transfer of an acyl group from acyl-phosphate (acyl-PO(4)) to glycerol-3-phosphate (G3P) to form lysophosphatidic acid (LPA). This enzyme utilizes acyl-phosphate as fatty acyl donor, but not acyl-CoA or acyl-ACP. This is Glycerol-3-phosphate acyltransferase from Acholeplasma laidlawii.